Reading from the N-terminus, the 602-residue chain is Aspartate--tRNA(Asp/Asn) ligase (602 aa).

Position 176 (Glu-176) interacts with L-aspartate. The interval 200–203 is aspartate; that stretch reads QQFK. L-aspartate is bound by residues Arg-222 and His-452. An ATP-binding site is contributed by 222–224; the sequence is RDE. Position 490 (Glu-490) interacts with ATP. Position 497 (Arg-497) interacts with L-aspartate. Residue 542–545 coordinates ATP; that stretch reads GIDR.

It belongs to the class-II aminoacyl-tRNA synthetase family. Type 1 subfamily. Homodimer.

Its subcellular location is the cytoplasm. It catalyses the reaction tRNA(Asx) + L-aspartate + ATP = L-aspartyl-tRNA(Asx) + AMP + diphosphate. Its function is as follows. Aspartyl-tRNA synthetase with relaxed tRNA specificity since it is able to aspartylate not only its cognate tRNA(Asp) but also tRNA(Asn). Reaction proceeds in two steps: L-aspartate is first activated by ATP to form Asp-AMP and then transferred to the acceptor end of tRNA(Asp/Asn). The sequence is that of Aspartate--tRNA(Asp/Asn) ligase from Rickettsia conorii (strain ATCC VR-613 / Malish 7).